The following is a 156-amino-acid chain: Small ribosomal subunit protein uS7 (156 aa).

The protein belongs to the universal ribosomal protein uS7 family. Part of the 30S ribosomal subunit. Contacts proteins S9 and S11.

In terms of biological role, one of the primary rRNA binding proteins, it binds directly to 16S rRNA where it nucleates assembly of the head domain of the 30S subunit. Is located at the subunit interface close to the decoding center, probably blocks exit of the E-site tRNA. In Streptococcus mutans serotype c (strain ATCC 700610 / UA159), this protein is Small ribosomal subunit protein uS7.